A 343-amino-acid chain; its full sequence is Olfactory receptor 1E3 (343 aa).

The Extracellular portion of the chain corresponds to Met-1 to Tyr-28. The N-linked (GlcNAc...) asparagine glycan is linked to Asn-5. Residues Ala-29–Ile-49 traverse the membrane as a helical segment. At Arg-50–Tyr-107 the chain is on the cytoplasmic side. A disulfide bridge links Cys-97 with Cys-179. Residues Gly-108 to Phe-128 traverse the membrane as a helical segment. Topologically, residues Pro-129–Cys-141 are extracellular. The chain crosses the membrane as a helical span at residues Leu-142–Leu-162. The Cytoplasmic portion of the chain corresponds to Met-163 to Asn-195. A helical membrane pass occupies residues Gly-196 to Met-216. Topologically, residues Ser-217 to Gly-242 are extracellular. The helical transmembrane segment at Pro-243–Leu-263 threads the bilayer. Topologically, residues Thr-264–Asp-271 are cytoplasmic. Residues Thr-272–Leu-292 traverse the membrane as a helical segment. Residues Arg-293–Asn-310 are Extracellular-facing. A helical transmembrane segment spans residues Phe-311 to Val-331. Residues Lys-332–Ala-343 lie on the Cytoplasmic side of the membrane.

Belongs to the G-protein coupled receptor 1 family.

It localises to the cell membrane. Odorant receptor. The sequence is that of Olfactory receptor 1E3 (OR1E3) from Homo sapiens (Human).